Here is a 307-residue protein sequence, read N- to C-terminus: Histone deacetylase HDT1 (307 aa).

Acidic residues predominate over residues 98–112 (EDEMDLDSEDEDEEL). The interval 98 to 280 (EDEMDLDSED…KSGGSVPCKP (183 aa)) is disordered. Over residues 119-132 (ENGKADEKKQKSQE) the composition is skewed to basic and acidic residues. A compositionally biased stretch (acidic residues) spans 151–197 (DDDSDEDETDDSDEDETDDSDEGLSSEEGDDDSSDEDDTSDDEEEDT). The segment covering 198–211 (PTPKKPEVGKKRPA) has biased composition (basic and acidic residues). A compositionally biased stretch (low complexity) spans 265 to 277 (SPKSAPKSGGSVP). The C2H2-type; degenerate zinc-finger motif lies at 276-299 (VPCKPCSKSFISETALQAHSRAKM).

Belongs to the histone deacetylase HD2 family. As to quaternary structure, multimer. Isolated as a trimer composed of 3 proteins of 39, 42 and 45 kDa, possibly a homotrimer with different phosphorylation status or a heterotrimer with HDT2 and/or HDT3. Post-translationally, the N-terminus is blocked. Phosphorylated. Required for enzyme activity.

It localises to the nucleus. The protein localises to the nucleolus. With respect to regulation, inhibited by 3-(4-Aroyl-1-methyl-1H-pyrrol-2-yl)-N-hydroxy-2-propenamides. 3-(1-methyl-4-phenylacetyl-1H-pyrrol-2-yl)-N-hydroxy-2-propenamide 1b and 3-[1-methyl-4-(3-phenyl-2-propenoyl)-1H-pyrrol-2-yl]-N-hydroxy-2-propenamide 1c are very potent inhibitors. Mediates the deacetylation of lysine residues on the N-terminal part of the core histones (H2A, H2B, H3 and H4). Histone deacetylation gives a tag for epigenetic repression and plays an important role in transcriptional regulation, cell cycle progression and developmental events. Able to deacetylate all 4 core histones. This chain is Histone deacetylase HDT1 (HDT1), found in Zea mays (Maize).